The following is a 297-amino-acid chain: Small ribosomal subunit biogenesis GTPase RsgA (297 aa).

The CP-type G domain occupies 65-223; the sequence is RNELVRPPVA…VADTPGFSAI (159 aa). GTP contacts are provided by residues 114-117 and 166-174; these read TKVD and GQSGAGKST. Residues Cys-247, Cys-252, His-254, and Cys-260 each coordinate Zn(2+).

The protein belongs to the TRAFAC class YlqF/YawG GTPase family. RsgA subfamily. In terms of assembly, monomer. Associates with 30S ribosomal subunit, binds 16S rRNA. Requires Zn(2+) as cofactor.

Its subcellular location is the cytoplasm. One of several proteins that assist in the late maturation steps of the functional core of the 30S ribosomal subunit. Helps release RbfA from mature subunits. May play a role in the assembly of ribosomal proteins into the subunit. Circularly permuted GTPase that catalyzes slow GTP hydrolysis, GTPase activity is stimulated by the 30S ribosomal subunit. This Enterococcus faecalis (strain ATCC 700802 / V583) protein is Small ribosomal subunit biogenesis GTPase RsgA.